The chain runs to 486 residues: Small ribosomal subunit protein uS17B (486 aa).

A 30S ribosomal protein S17 region spans residues Met1 to Val112. Residues Asp113–Ser486 form a unknown region.

Belongs to the universal ribosomal protein uS17 family. Part of the 30S ribosomal subunit.

In terms of biological role, one of the primary rRNA binding proteins, it binds specifically to the 5'-end of 16S ribosomal RNA. The sequence is that of Small ribosomal subunit protein uS17B from Methanosarcina acetivorans (strain ATCC 35395 / DSM 2834 / JCM 12185 / C2A).